We begin with the raw amino-acid sequence, 177 residues long: ATP-dependent protease subunit HslV (177 aa).

The active site involves Thr7. Residues Ala162, Cys165, and Thr168 each contribute to the Na(+) site.

The protein belongs to the peptidase T1B family. HslV subfamily. A double ring-shaped homohexamer of HslV is capped on each side by a ring-shaped HslU homohexamer. The assembly of the HslU/HslV complex is dependent on binding of ATP.

It localises to the cytoplasm. It catalyses the reaction ATP-dependent cleavage of peptide bonds with broad specificity.. With respect to regulation, allosterically activated by HslU binding. Protease subunit of a proteasome-like degradation complex believed to be a general protein degrading machinery. The chain is ATP-dependent protease subunit HslV from Leptospira biflexa serovar Patoc (strain Patoc 1 / Ames).